Reading from the N-terminus, the 165-residue chain is SsrA-binding protein (165 aa).

The protein belongs to the SmpB family.

The protein resides in the cytoplasm. Its function is as follows. Required for rescue of stalled ribosomes mediated by trans-translation. Binds to transfer-messenger RNA (tmRNA), required for stable association of tmRNA with ribosomes. tmRNA and SmpB together mimic tRNA shape, replacing the anticodon stem-loop with SmpB. tmRNA is encoded by the ssrA gene; the 2 termini fold to resemble tRNA(Ala) and it encodes a 'tag peptide', a short internal open reading frame. During trans-translation Ala-aminoacylated tmRNA acts like a tRNA, entering the A-site of stalled ribosomes, displacing the stalled mRNA. The ribosome then switches to translate the ORF on the tmRNA; the nascent peptide is terminated with the 'tag peptide' encoded by the tmRNA and targeted for degradation. The ribosome is freed to recommence translation, which seems to be the essential function of trans-translation. This Parvibaculum lavamentivorans (strain DS-1 / DSM 13023 / NCIMB 13966) protein is SsrA-binding protein.